A 421-amino-acid polypeptide reads, in one-letter code: Immunoglobulin heavy constant epsilon (421 aa).

Ig-like domains follow at residues 5 to 97 (PQLY…VNIT), 99 to 184 (PTLE…KVTS), 201 to 301 (PRGV…RSIT), and 310 to 410 (PEVY…KTIS). Cysteines 23 and 75 form a disulfide. Residues N43, N72, N84, N95, N166, N238, N261, N365, and N415 are each glycosylated (N-linked (GlcNAc...) asparagine). Cystine bridges form between C121–C180, C226–C285, and C330–C392.

The basic structural unit consists of two identical heavy chains and two identical light chains; disulfide-linked. N-terminal variable regions of the heavy and light chains form the antigen binding sites, whereas the C-terminal constant regions of the heavy chains interact with immune receptors to mediate effector functions.

It is found in the secreted. The protein resides in the cell membrane. Constant region of immunoglobulin heavy chains. Immunoglobulins, also known as antibodies, are membrane-bound or secreted glycoproteins produced by B lymphocytes. In the recognition phase of humoral immunity, the membrane-bound immunoglobulins serve as receptors which, upon binding of a specific antigen, trigger the clonal expansion and differentiation of B lymphocytes into immunoglobulins-secreting plasma cells. Secreted immunoglobulins mediate the effector phase of humoral immunity, which results in the elimination of bound antigens. The antigen binding site is formed by the variable domain of one heavy chain, together with that of its associated light chain. Thus, each immunoglobulin has two antigen binding sites with remarkable affinity for a particular antigen. The variable domains are assembled by a process called V-(D)-J rearrangement and can then be subjected to somatic hypermutations which, after exposure to antigen and selection, allow affinity maturation for a particular antigen. In Mus musculus (Mouse), this protein is Immunoglobulin heavy constant epsilon.